A 398-amino-acid polypeptide reads, in one-letter code: 2-amino-3-ketobutyrate coenzyme A ligase (398 aa).

111-112 (CF) contacts pyridoxal 5'-phosphate. H136 lines the substrate pocket. Pyridoxal 5'-phosphate-binding positions include S185, 210–213 (DDSH), 241–244 (TLGK), and 274–275 (SN). An N6-(pyridoxal phosphate)lysine modification is found at K244. R368 provides a ligand contact to substrate.

The protein belongs to the class-II pyridoxal-phosphate-dependent aminotransferase family. Homodimer. The cofactor is pyridoxal 5'-phosphate.

The catalysed reaction is glycine + acetyl-CoA = (2S)-2-amino-3-oxobutanoate + CoA. Its pathway is amino-acid degradation; L-threonine degradation via oxydo-reductase pathway; glycine from L-threonine: step 2/2. Catalyzes the cleavage of 2-amino-3-ketobutyrate to glycine and acetyl-CoA. The polypeptide is 2-amino-3-ketobutyrate coenzyme A ligase (Escherichia coli (strain K12)).